Consider the following 198-residue polypeptide: FMN-dependent NADH:quinone oxidoreductase (198 aa).

96–99 contributes to the FMN binding site; that stretch reads MYNF.

It belongs to the azoreductase type 1 family. As to quaternary structure, homodimer. Requires FMN as cofactor.

The enzyme catalyses 2 a quinone + NADH + H(+) = 2 a 1,4-benzosemiquinone + NAD(+). It catalyses the reaction N,N-dimethyl-1,4-phenylenediamine + anthranilate + 2 NAD(+) = 2-(4-dimethylaminophenyl)diazenylbenzoate + 2 NADH + 2 H(+). Quinone reductase that provides resistance to thiol-specific stress caused by electrophilic quinones. Functionally, also exhibits azoreductase activity. Catalyzes the reductive cleavage of the azo bond in aromatic azo compounds to the corresponding amines. The protein is FMN-dependent NADH:quinone oxidoreductase of Burkholderia thailandensis (strain ATCC 700388 / DSM 13276 / CCUG 48851 / CIP 106301 / E264).